Here is an 84-residue protein sequence, read N- to C-terminus: Putative movement protein (84 aa).

The helical transmembrane segment at 15–35 (ALHGILVAFIAVLCLIGCLWA) threads the bilayer.

Interacts with the capsid protein (CP). Part of a MP-CP-viral DNA complex.

The protein localises to the host membrane. Its function is as follows. Involved in the viral transport within, and between cells. This chain is Putative movement protein, found in Miscanthus streak virus (isolate 91) (MiSV).